Consider the following 499-residue polypeptide: Aspartyl/glutamyl-tRNA(Asn/Gln) amidotransferase subunit B (499 aa).

This sequence belongs to the GatB/GatE family. GatB subfamily. Heterotrimer of A, B and C subunits.

The catalysed reaction is L-glutamyl-tRNA(Gln) + L-glutamine + ATP + H2O = L-glutaminyl-tRNA(Gln) + L-glutamate + ADP + phosphate + H(+). The enzyme catalyses L-aspartyl-tRNA(Asn) + L-glutamine + ATP + H2O = L-asparaginyl-tRNA(Asn) + L-glutamate + ADP + phosphate + 2 H(+). Allows the formation of correctly charged Asn-tRNA(Asn) or Gln-tRNA(Gln) through the transamidation of misacylated Asp-tRNA(Asn) or Glu-tRNA(Gln) in organisms which lack either or both of asparaginyl-tRNA or glutaminyl-tRNA synthetases. The reaction takes place in the presence of glutamine and ATP through an activated phospho-Asp-tRNA(Asn) or phospho-Glu-tRNA(Gln). The polypeptide is Aspartyl/glutamyl-tRNA(Asn/Gln) amidotransferase subunit B (Bartonella bacilliformis (strain ATCC 35685 / KC583 / Herrer 020/F12,63)).